Here is a 180-residue protein sequence, read N- to C-terminus: Secreted RxLR effector protein 5 (180 aa).

The signal sequence occupies residues 1-24 (MRFYYTLLATAAALLVHSDALSAA). The short motif at 44 to 60 (RFLRRHTDSETTDNEER) is the RxLR-dEER element.

This sequence belongs to the RxLR effector family.

It localises to the secreted. It is found in the host cell. Functionally, secreted effector that partially suppresses elicitor-induced cell death in host and enhances virulence of P.parasitica. The polypeptide is Secreted RxLR effector protein 5 (Phytophthora nicotianae (Potato buckeye rot agent)).